Reading from the N-terminus, the 146-residue chain is Ecotin-like protein 1 (146 aa).

This sequence belongs to the protease inhibitor I11 (ecotin) family.

The sequence is that of Ecotin-like protein 1 (ISP1) from Leishmania major.